Consider the following 379-residue polypeptide: Glucose-insensitive transcription protein 7 (379 aa).

In terms of domain architecture, CS spans 181–272 (SNRIRYDWSQ…VSEIKWEALV (92 aa)). The SGS domain maps to 292-379 (ASGNTKNKAK…PPQGMEPKKF (88 aa)). Residues 345–379 (SYTESNGTALSTNWKDVKSKTFETKPPQGMEPKKF) are disordered. Over residues 346 to 358 (YTESNGTALSTNW) the composition is skewed to polar residues.

Functionally, involved in cyclic AMP (cAMP) pathway, possibly by participating in the assembly or the conformational activation of specific multiprotein complexes. This chain is Glucose-insensitive transcription protein 7 (git7), found in Schizosaccharomyces pombe (strain 972 / ATCC 24843) (Fission yeast).